The chain runs to 624 residues: tRNA uridine 5-carboxymethylaminomethyl modification enzyme MnmG (624 aa).

FAD is bound by residues 13 to 18 (GAGHAG), Val125, and Ser180. Residue 272–286 (GPRYCPSIEDKVVKF) coordinates NAD(+). Residue Gln369 coordinates FAD.

Belongs to the MnmG family. Homodimer. Heterotetramer of two MnmE and two MnmG subunits. Requires FAD as cofactor.

The protein resides in the cytoplasm. NAD-binding protein involved in the addition of a carboxymethylaminomethyl (cmnm) group at the wobble position (U34) of certain tRNAs, forming tRNA-cmnm(5)s(2)U34. This is tRNA uridine 5-carboxymethylaminomethyl modification enzyme MnmG from Thermodesulfovibrio yellowstonii (strain ATCC 51303 / DSM 11347 / YP87).